A 174-amino-acid chain; its full sequence is Co-chaperone protein HscB homolog (174 aa).

The 73-residue stretch at 2–74 (NYFELFKFSP…IRRAEHMLSL (73 aa)) folds into the J domain.

Belongs to the HscB family. In terms of assembly, interacts with HscA and stimulates its ATPase activity.

Functionally, co-chaperone involved in the maturation of iron-sulfur cluster-containing proteins. Seems to help targeting proteins to be folded toward HscA. The chain is Co-chaperone protein HscB homolog from Shewanella baltica (strain OS185).